The primary structure comprises 204 residues: Guanylate kinase (204 aa).

Positions A16–K196 constitute a Guanylate kinase-like domain. A23–S30 contacts ATP.

Belongs to the guanylate kinase family.

The protein localises to the cytoplasm. The enzyme catalyses GMP + ATP = GDP + ADP. Functionally, essential for recycling GMP and indirectly, cGMP. In Bacteroides fragilis (strain ATCC 25285 / DSM 2151 / CCUG 4856 / JCM 11019 / LMG 10263 / NCTC 9343 / Onslow / VPI 2553 / EN-2), this protein is Guanylate kinase.